The chain runs to 730 residues: Hepatocyte growth factor (730 aa).

A signal peptide spans 1–31 (MWVTRLLPVLLLQHVLLHLLLLPIAIPYAEG). A Pyrrolidone carboxylic acid modification is found at Q32. One can recognise a PAN domain in the interval 37–123 (NTLHEFKRSA…HEFDLYENKD (87 aa)). Intrachain disulfides connect C70–C96, C74–C84, C128–C206, C149–C189, C177–C201, C211–C288, C232–C271, and C260–C283. Kringle domains follow at residues 128 to 206 (CIIG…IPQC) and 211 to 288 (CMTC…IKMC). N-linked (GlcNAc...) asparagine glycosylation occurs at N294. Intrachain disulfides connect C305-C383, C326-C365, C354-C377, C391-C469, C412-C452, C440-C464, C487-C606, C519-C535, C614-C681, C644-C660, and C671-C699. Kringle domains follow at residues 305–383 (CIQG…IPKC) and 391–469 (CYRG…ISRC). One can recognise a Peptidase S1 domain in the interval 495–723 (VVNGIPTRTN…YAKWIHKIIL (229 aa)). Residues N568 and N655 are each glycosylated (N-linked (GlcNAc...) asparagine).

This sequence belongs to the peptidase S1 family. Plasminogen subfamily. As to quaternary structure, dimer of an alpha chain and a beta chain linked by a disulfide bond. Interacts with SRPX2; the interaction increases HGF mitogenic activity. In terms of processing, the single-chain precursor undergoes proteolytic processing by TMPRSS13 resulting in an active two-chain form. The single-chain precursor undergoes proteolytic processing by HGFAC resulting in an active two-chain form.

Functionally, potent mitogen for mature parenchymal hepatocyte cells, seems to be a hepatotrophic factor, and acts as a growth factor for a broad spectrum of tissues and cell types. Activating ligand for the receptor tyrosine kinase MET by binding to it and promoting its dimerization. Activates MAPK signaling following TMPRSS13 cleavage and activation. The sequence is that of Hepatocyte growth factor (HGF) from Bos taurus (Bovine).